A 76-amino-acid polypeptide reads, in one-letter code: Lividin-2 (76 aa).

A signal peptide spans 1 to 22; sequence MFTLKKSLLLLFFLGTISLSLC. Residues 23–41 constitute a propeptide that is removed on maturation; it reads QEERNADEEDGGEVTEEEV. Cysteines 70 and 76 form a disulfide.

Expressed by the skin glands.

The protein resides in the secreted. Its function is as follows. Antimicrobial peptide. This is Lividin-2 from Odorrana livida (Green mountain frog).